The primary structure comprises 149 residues: UPF0756 membrane protein BBR47_32760 (149 aa).

5 helical membrane passes run 3–23 (WISIILLVLLALGVIGNNATV), 48–68 (HGLQLGIIILTIGIMTPLASG), 85–105 (LLAVAVGMFVAYLAGKGTVLM), 106–126 (SQNPLIVTGLLLGTIAGVTFF), and 128–148 (GVAVGPLIAAGILAFILQFLP).

It belongs to the UPF0756 family.

It localises to the cell membrane. This is UPF0756 membrane protein BBR47_32760 from Brevibacillus brevis (strain 47 / JCM 6285 / NBRC 100599).